Reading from the N-terminus, the 477-residue chain is ATP-dependent rRNA helicase RRP3 (477 aa).

A disordered region spans residues 1–22; the sequence is MSVKVDGMINKKSKTHSKKLDA. Positions 65-93 match the Q motif motif; that stretch reads KSFNELKLIPELLEAIQQMKFTKPTPIQS. Positions 96-267 constitute a Helicase ATP-binding domain; the sequence is IPHALEGKDI…RASLHNPVRV (172 aa). 109 to 116 serves as a coordination point for ATP; it reads AQTGSGKT. The short motif at 215 to 218 is the DEAD box element; the sequence is DEAD. The Helicase C-terminal domain occupies 294–438; it reads YLIHLLNEFL…KDPSPSKAVL (145 aa). A disordered region spans residues 452 to 477; it reads AIRQTKDFHEKRNPKKNRDDRDREER.

Belongs to the DEAD box helicase family. DDX47/RRP3 subfamily. Interacts with the SSU processome.

The protein localises to the nucleus. It carries out the reaction ATP + H2O = ADP + phosphate + H(+). Its function is as follows. ATP-dependent rRNA helicase required for pre-ribosomal RNA processing. Involved in the maturation of the 35S-pre-rRNA and to its cleavage to mature 18S rRNA. In Debaryomyces hansenii (strain ATCC 36239 / CBS 767 / BCRC 21394 / JCM 1990 / NBRC 0083 / IGC 2968) (Yeast), this protein is ATP-dependent rRNA helicase RRP3.